The primary structure comprises 83 residues: uncharacterized protein (83 aa).

This is an uncharacterized protein from Dictyostelium discoideum (Social amoeba).